Consider the following 117-residue polypeptide: MARVKTGVVRRRRHKKVLKLARGFYSGRRKHFRKAKEQLERSLVYAYRDRRRKKRDFRRLWIVRINAACRLNDLSYSRFINGLKKAGIELDRKILADLAMNDAAAFAKIAEAAKKAL.

The protein belongs to the bacterial ribosomal protein bL20 family.

In terms of biological role, binds directly to 23S ribosomal RNA and is necessary for the in vitro assembly process of the 50S ribosomal subunit. It is not involved in the protein synthesizing functions of that subunit. This Campylobacter jejuni subsp. jejuni serotype O:2 (strain ATCC 700819 / NCTC 11168) protein is Large ribosomal subunit protein bL20.